A 564-amino-acid chain; its full sequence is Urocanate hydratase (564 aa).

Residues 58 to 59, Gln-136, 182 to 184, Glu-202, Arg-207, 248 to 249, 269 to 273, 279 to 280, and Tyr-328 each bind NAD(+); these read GG, GMG, NA, QTSAH, and YL. Residue Cys-416 is part of the active site. Position 498 (Gly-498) interacts with NAD(+).

It belongs to the urocanase family. It depends on NAD(+) as a cofactor.

It is found in the cytoplasm. The catalysed reaction is 4-imidazolone-5-propanoate = trans-urocanate + H2O. It functions in the pathway amino-acid degradation; L-histidine degradation into L-glutamate; N-formimidoyl-L-glutamate from L-histidine: step 2/3. Its function is as follows. Catalyzes the conversion of urocanate to 4-imidazolone-5-propionate. The protein is Urocanate hydratase of Aliivibrio salmonicida (strain LFI1238) (Vibrio salmonicida (strain LFI1238)).